The following is a 98-amino-acid chain: MPRSLKKGPFIDFKLEQRILDMNSKGEKKVLKTWSRSSMISPDFVGHTIAVHNGKTHVPVYVGDNMVGHKLGEFAPTRTFRGHAGGKAEKGGSAPKKK.

The interval 77-98 is disordered; it reads TRTFRGHAGGKAEKGGSAPKKK.

It belongs to the universal ribosomal protein uS19 family.

Its function is as follows. Protein S19 forms a complex with S13 that binds strongly to the 16S ribosomal RNA. The chain is Small ribosomal subunit protein uS19 from Chlorobium phaeobacteroides (strain DSM 266 / SMG 266 / 2430).